The chain runs to 726 residues: tRNA endonuclease ANKZF1 (726 aa).

A disordered region spans residues 40-61 (LARAPRTSCSGSGERESPERKL). Basic and acidic residues predominate over residues 52-61 (GERESPERKL). The C2H2-type zinc-finger motif lies at 72–96 (LFCSTCDQTFQNHQEQREHYKLDWH). Low complexity predominate over residues 120–130 (STGDLSSISGS). The segment at 120–141 (STGDLSSISGSEDSDSASEEDL) is disordered. Residues 131-141 (EDSDSASEEDL) show a composition bias toward acidic residues. The VLRF1 domain occupies 203–346 (GPRDCVVLMA…QRVLHKLTTL (144 aa)). The active site involves Gln-246. Phosphoserine occurs at positions 258, 361, and 398. Disordered stretches follow at residues 387–409 (DEKEALGQNEESPKQGSGSEGED) and 436–474 (RRRRKRNKKEKSRDQEAGAHRTLLQQTQEEEPSTQSSQA). Residues 436–445 (RRRRKRNKKE) are compositionally biased toward basic residues. Residues 457–473 (TLLQQTQEEEPSTQSSQ) are compositionally biased toward low complexity. Residues 493–526 (ELWNALLAACRAGDVGVLKLQLAPSPADPRVLSL) form an ANK 1 repeat. Position 533 is a phosphoserine (Ser-533). Residues 534–563 (GGFTLLHAAAAAGRGSVVRLLLEAGADPTV) form an ANK 2 repeat. Positions 588–656 (MEKNPDAYDY…RRFAALSDRE (69 aa)) are disordered. Thr-607 carries the phosphothreonine modification. Residues 609-659 (EMEARQATRKREQKAARRQREEQQQRQQEQEEREREEQRRFAALSDREKRA) are a coiled coil. The span at 610 to 656 (MEARQATRKREQKAARRQREEQQQRQQEQEEREREEQRRFAALSDRE) shows a compositional bias: basic and acidic residues. The tract at residues 654–666 (DREKRALAAERRL) is VCP/p97-interacting motif (VIM). 2 positions are modified to phosphoserine: Ser-675 and Ser-680.

This sequence belongs to the ANKZF1/VMS1 family. In terms of assembly, interacts (via VIM motif) with VCP.

The protein localises to the cytoplasm. In terms of biological role, endonuclease that cleaves polypeptidyl-tRNAs downstream of the ribosome-associated quality control (RQC) pathway to release incompletely synthesized polypeptides for degradation. The RQC pathway disassembles aberrantly stalled translation complexes to recycle or degrade the constituent parts. ANKZF1 acts downstream disassembly of stalled ribosomes and specifically cleaves off the terminal 3'-CCA nucleotides universal to all tRNAs from polypeptidyl-tRNAs, releasing (1) ubiquitinated polypeptides from 60S ribosomal subunit for degradation and (2) cleaved tRNAs. ANKZF1-cleaved tRNAs are then repaired and recycled by ELAC1 and TRNT1. Also plays a role in the cellular response to hydrogen peroxide and in the maintenance of mitochondrial integrity under conditions of cellular stress. This chain is tRNA endonuclease ANKZF1, found in Homo sapiens (Human).